Here is a 217-residue protein sequence, read N- to C-terminus: 3,4-dihydroxy-2-butanone 4-phosphate synthase (217 aa).

Residues 37–38 (RE), aspartate 42, 150–154 (RGGHT), and glutamate 174 each bind D-ribulose 5-phosphate. Glutamate 38 is a Mg(2+) binding site. Histidine 153 serves as a coordination point for Mg(2+).

The protein belongs to the DHBP synthase family. As to quaternary structure, homodimer. The cofactor is Mg(2+). Mn(2+) is required as a cofactor.

It catalyses the reaction D-ribulose 5-phosphate = (2S)-2-hydroxy-3-oxobutyl phosphate + formate + H(+). It participates in cofactor biosynthesis; riboflavin biosynthesis; 2-hydroxy-3-oxobutyl phosphate from D-ribulose 5-phosphate: step 1/1. Its function is as follows. Catalyzes the conversion of D-ribulose 5-phosphate to formate and 3,4-dihydroxy-2-butanone 4-phosphate. This is 3,4-dihydroxy-2-butanone 4-phosphate synthase from Escherichia coli O127:H6 (strain E2348/69 / EPEC).